Consider the following 363-residue polypeptide: Histidinol-phosphate aminotransferase (363 aa).

K218 is modified (N6-(pyridoxal phosphate)lysine).

The protein belongs to the class-II pyridoxal-phosphate-dependent aminotransferase family. Histidinol-phosphate aminotransferase subfamily. As to quaternary structure, homodimer. It depends on pyridoxal 5'-phosphate as a cofactor.

It carries out the reaction L-histidinol phosphate + 2-oxoglutarate = 3-(imidazol-4-yl)-2-oxopropyl phosphate + L-glutamate. The protein operates within amino-acid biosynthesis; L-histidine biosynthesis; L-histidine from 5-phospho-alpha-D-ribose 1-diphosphate: step 7/9. The chain is Histidinol-phosphate aminotransferase from Xanthomonas axonopodis pv. citri (strain 306).